Reading from the N-terminus, the 217-residue chain is Large ribosomal subunit protein uL1 (217 aa).

Belongs to the universal ribosomal protein uL1 family.

This is Large ribosomal subunit protein uL1 (RpL10Ab) from Drosophila melanogaster (Fruit fly).